A 350-amino-acid chain; its full sequence is MEVRHNWTVAEVKALLDKPFMDLLFEAQQVHRLHHPHNHVQVSTLLSIKTGACPEDCKYCPQSAHYRTDVDKERLMEVERVLDAAQKAKNSGSTRFCMGAAWKNPKERDMPLLKEMIRGVKDMGLETCMTLGMLTPDQAQQLAQAGLDYYNHNLDTSPEFYGNIITTRTYQDRLDTLSHVRDAGMKICSGGIIGMGESTNDRAGLLVELANLPTHPESVPINMLVKVKGTPLEQVDDVEPFDFVRLIAVARIMMPKSAVRLSAGREKMNEQMQALCFMAGANSIFYGCKLLTTPNPAEDSDMLLFKKLGINREQVAQKPDEITENELLDRVVERVAARPTASDLFYDAAL.

In terms of domain architecture, Radical SAM core spans 38–256 (NHVQVSTLLS…IAVARIMMPK (219 aa)). Cys-53, Cys-57, and Cys-60 together coordinate [4Fe-4S] cluster. [2Fe-2S] cluster-binding residues include Cys-97, Cys-128, Cys-188, and Arg-260.

The protein belongs to the radical SAM superfamily. Biotin synthase family. As to quaternary structure, homodimer. Requires [4Fe-4S] cluster as cofactor. The cofactor is [2Fe-2S] cluster.

It carries out the reaction (4R,5S)-dethiobiotin + (sulfur carrier)-SH + 2 reduced [2Fe-2S]-[ferredoxin] + 2 S-adenosyl-L-methionine = (sulfur carrier)-H + biotin + 2 5'-deoxyadenosine + 2 L-methionine + 2 oxidized [2Fe-2S]-[ferredoxin]. It functions in the pathway cofactor biosynthesis; biotin biosynthesis; biotin from 7,8-diaminononanoate: step 2/2. Catalyzes the conversion of dethiobiotin (DTB) to biotin by the insertion of a sulfur atom into dethiobiotin via a radical-based mechanism. The polypeptide is Biotin synthase (Vibrio cholerae serotype O1 (strain ATCC 39541 / Classical Ogawa 395 / O395)).